We begin with the raw amino-acid sequence, 90 residues long: Small ribosomal subunit protein bS16 (90 aa).

Belongs to the bacterial ribosomal protein bS16 family.

The polypeptide is Small ribosomal subunit protein bS16 (Geobacillus kaustophilus (strain HTA426)).